The primary structure comprises 141 residues: Nucleoside diphosphate kinase (141 aa).

The ATP site is built by lysine 11, phenylalanine 59, arginine 87, threonine 93, arginine 104, and asparagine 114. The Pros-phosphohistidine intermediate role is filled by histidine 117.

The protein belongs to the NDK family. In terms of assembly, homotetramer. Mg(2+) serves as cofactor.

It is found in the cytoplasm. It catalyses the reaction a 2'-deoxyribonucleoside 5'-diphosphate + ATP = a 2'-deoxyribonucleoside 5'-triphosphate + ADP. It carries out the reaction a ribonucleoside 5'-diphosphate + ATP = a ribonucleoside 5'-triphosphate + ADP. In terms of biological role, major role in the synthesis of nucleoside triphosphates other than ATP. The ATP gamma phosphate is transferred to the NDP beta phosphate via a ping-pong mechanism, using a phosphorylated active-site intermediate. This chain is Nucleoside diphosphate kinase, found in Bdellovibrio bacteriovorus (strain ATCC 15356 / DSM 50701 / NCIMB 9529 / HD100).